The following is a 576-amino-acid chain: Ecdysone receptor (576 aa).

Positions 1–162 (MSLGARGYRR…GPAPRQQEEL (162 aa)) are modulating. The segment at 87-154 (CTMEQQQPQP…GEARRQKKGP (68 aa)) is disordered. Residues 91–106 (QQQPQPQQQPQQTQPL) are compositionally biased toward low complexity. The span at 107–117 (PSMPLPMPPTT) shows a compositional bias: pro residues. NR C4-type zinc fingers lie at residues 163 to 183 (CLVCGDRASGYHYNALTCEGC) and 199 to 223 (CKFGHACEMDIYMRRKCQECRLKKC). Positions 163 to 235 (CLVCGDRASG…VGMRPECVVP (73 aa)) form a DNA-binding region, nuclear receptor. The segment at 245–269 (EKKAQREKDKLPVSTTTVDDHMPPI) is disordered. The NR LBD domain maps to 314 to 548 (NQKSLIARLV…FLEEIWDVAD (235 aa)).

This sequence belongs to the nuclear hormone receptor family. NR1 subfamily.

The protein localises to the nucleus. In terms of biological role, receptor for ecdysone. Binds to ecdysone response elements (ECRES). The sequence is that of Ecdysone receptor (EcR) from Heliothis virescens (Tobacco budworm moth).